Consider the following 401-residue polypeptide: UDP-GlcNAc:betaGal beta-1,3-N-acetylglucosaminyltransferase 9 (401 aa).

The Cytoplasmic portion of the chain corresponds to 1–10 (MRRRLRLRRE). Residues 11–31 (ALLTLLLGATLGLLLYAQQEG) traverse the membrane as a helical; Signal-anchor for type II membrane protein segment. The Lumenal segment spans residues 32–401 (AAPTTSAPRA…VPAGPFQWGP (370 aa)). The segment at 33 to 85 (APTTSAPRAQGRAAPGPTPGLRVFQAPDTGAAPPAYEGDTPEPPTPTGPFDFG) is disordered. The span at 38 to 47 (APRAQGRAAP) shows a compositional bias: low complexity.

Belongs to the glycosyltransferase 31 family.

It localises to the golgi apparatus membrane. The protein is UDP-GlcNAc:betaGal beta-1,3-N-acetylglucosaminyltransferase 9 of Bos taurus (Bovine).